Consider the following 956-residue polypeptide: Calsyntenin-3 (956 aa).

The N-terminal stretch at 1-19 (MTLLLLPLLLASLLASCSC) is a signal peptide. The Extracellular segment spans residues 20–847 (NKANKHKPWI…SHRNSMIPSA (828 aa)). Cadherin domains are found at residues 29–145 (IEAE…APVF) and 146–246 (VERL…KPSW). N-linked (GlcNAc...) asparagine glycosylation is found at Asn-299, Asn-327, Asn-347, Asn-507, and Asn-740. The helical transmembrane segment at 848-868 (ATLIIVVCVGFLVLMVVLGLV) threads the bilayer. Topologically, residues 869 to 956 (RIHSLHRRVS…RIIETPPHRY (88 aa)) are cytoplasmic. A disordered region spans residues 917–956 (ACVTGAVGGQQEDEDSSDSEVADSPSSDERRIIETPPHRY). Over residues 927-937 (QEDEDSSDSEV) the composition is skewed to acidic residues. Basic and acidic residues predominate over residues 943-956 (SDERRIIETPPHRY).

Belongs to the calsyntenin family. Interacts (via cadherin domains) with both alpha and beta isoforms of neurexins (NRXN1, NRXN2 and NRXN3). Directly interacts with APBA2. Forms a tripartite complex with APBA2 and APP. Interacts with low affinity with KLC1. Interacts with SLC23A2/SVCT2. Proteolytically processed under normal cellular conditions. A primary zeta-cleavage generates a large extracellular (soluble) N-terminal domain (sAlc) and a short C-terminal transmembrane fragment (CTF1). A secondary cleavage catalyzed by gamma-secretase within the transmembrane domain releases the beta-Alc-beta chain in the extracellular milieu and produces an intracellular fragment (AlcICD). This processing is strongly suppressed in the tripartite complex formed with APBA2 and APP, which seems to prevent the association with gamma-secretase.

The protein resides in the postsynaptic cell membrane. It is found in the endoplasmic reticulum membrane. The protein localises to the golgi apparatus membrane. It localises to the cell projection. Its subcellular location is the dendrite. Its function is as follows. Postsynaptic adhesion molecule that binds to presynaptic neurexins to mediate both excitatory and inhibitory synapse formation. Promotes synapse development by acting as a cell adhesion molecule at the postsynaptic membrane, which associates with both neurexin-alpha and neurexin-beta proteins at the presynaptic membrane. Regulates the balance between excitatory and inhibitory synapses by inhibiting formation of excitatory parallel-fiber synapses and promoting formation of inhibitory synapses in the same neuron. May also be involved in ascorbate (vitamin C) uptake via its interaction with SLC23A2/SVCT2. Complex formation with APBA2 and APP, stabilizes APP metabolism and enhances APBA2-mediated suppression of beta-APP40 secretion, due to the retardation of intracellular APP maturation. In Pongo abelii (Sumatran orangutan), this protein is Calsyntenin-3 (CLSTN3).